We begin with the raw amino-acid sequence, 133 residues long: Interleukin-4 (133 aa).

An N-terminal signal peptide occupies residues 1–24 (MGLTYQLIPALVCLLAFTSTFVHG). 6 N-linked (GlcNAc...) asparagine glycosylation sites follow: asparagine 28, asparagine 45, asparagine 62, asparagine 84, asparagine 96, and asparagine 102. 2 cysteine pairs are disulfide-bonded: cysteine 48–cysteine 85 and cysteine 70–cysteine 113.

This sequence belongs to the IL-4/IL-13 family.

It localises to the secreted. In terms of biological role, participates in at least several B-cell activation processes as well as of other cell types. It is a costimulator of DNA-synthesis. It induces the expression of class II MHC molecules on resting B-cells. It enhances both secretion and cell surface expression of IgE and IgG1. It also regulates the expression of the low affinity Fc receptor for IgE (CD23) on both lymphocytes and monocytes. Positively regulates IL31RA expression in macrophages. Stimulates autophagy in dendritic cells by interfering with mTORC1 signaling and through the induction of RUFY4. This is Interleukin-4 (IL4) from Felis catus (Cat).